A 275-amino-acid polypeptide reads, in one-letter code: Orotidine 5'-phosphate decarboxylase (275 aa).

The active-site Proton donor is Lys-101.

Belongs to the OMP decarboxylase family. Type 2 subfamily.

The enzyme catalyses orotidine 5'-phosphate + H(+) = UMP + CO2. It participates in pyrimidine metabolism; UMP biosynthesis via de novo pathway; UMP from orotate: step 2/2. This chain is Orotidine 5'-phosphate decarboxylase, found in Leptospira interrogans serogroup Icterohaemorrhagiae serovar Lai (strain 56601).